Reading from the N-terminus, the 619-residue chain is UvrABC system protein C (619 aa).

The GIY-YIG domain occupies Thr-20–Val-98. In terms of domain architecture, UVR spans Asp-207–Met-242.

The protein belongs to the UvrC family. In terms of assembly, interacts with UvrB in an incision complex.

Its subcellular location is the cytoplasm. In terms of biological role, the UvrABC repair system catalyzes the recognition and processing of DNA lesions. UvrC both incises the 5' and 3' sides of the lesion. The N-terminal half is responsible for the 3' incision and the C-terminal half is responsible for the 5' incision. The chain is UvrABC system protein C from Xanthomonas axonopodis pv. citri (strain 306).